Consider the following 349-residue polypeptide: Protein BCCIP homolog (349 aa).

Residues 1 to 10 are compositionally biased toward basic residues; that stretch reads MGRVFKKKGG. Residues 1–65 are disordered; it reads MGRVFKKKGG…DDEEEDEDEQ (65 aa). Residues 11–33 show a composition bias toward basic and acidic residues; that stretch reads AKREAEEEKQEELVMRKKLRKEE. Residues 34–65 are compositionally biased toward acidic residues; the sequence is EPEPVEDVEEDEDVSDEDDEDIDDEEEDEDEQ.

The protein belongs to the BCP1 family.

This chain is Protein BCCIP homolog, found in Caenorhabditis elegans.